The chain runs to 574 residues: MSTTGNIAITGIPTTAGPDGSFPLRRELRDLQRNYPDHFNLLVLALKDFQALNESVQTSYYQIAGIHGLPYKPWNNVGSNSDWQSTSGFGGYCTHSSILFLTWHRPYLALFEQALYNSIQKIANQFPQGPLRTKYVEAAKTFRMPYFDWASQPPSGSSAFPSAFTAPSLQVVDVDGKTKSTANPIYRFVFHPVNPSPGDFPRQWSRFPTTVRYPNPRTGQSQDNRVAPILANELASLRTNVSLLLLSYTNFDAFSFNRWDPNMTPGEFGSLEDVHNEIHDRTGGGGHMSSLDVSSFDPLFWFHHTNVDRLWAIWQDLNPDNFLTPRPAPYSTFNSTEGESQTKDTPLTPFWDKSATKFWTSEEIKDTTTTFGYAYPETQEWKYRTGSEYQTSIRQAVTTLYGTNVFANFAAANVQARATEHTELIKSLSLAAPPPSAPITAEKPLLITQEMKASPIPEHLQHLAPNNKYPEWVVNIRAQKHGLHGAFRVIVFLGPIDESDPDSWQTEFNTVGRVSVLGRSTQGPTTTKCAKCITDAADELMISGTVPLTSALLQDIVNENTASIACSQRKWCRI.

Cu cation-binding residues include His-67, His-95, His-104, His-275, His-279, and His-304. Residues 93–95 (CTH) constitute a cross-link (2'-(S-cysteinyl)-histidine (Cys-His)).

The protein belongs to the tyrosinase family. It depends on Cu(2+) as a cofactor.

The catalysed reaction is 2 L-dopa + O2 = 2 L-dopaquinone + 2 H2O. The enzyme catalyses L-tyrosine + O2 = L-dopaquinone + H2O. This is a copper-containing oxidase that functions in the formation of pigments such as melanins and other polyphenolic compounds. The sequence is that of Tyrosinase (TYR) from Podospora anserina (Pleurage anserina).